The following is a 514-amino-acid chain: Xylose import ATP-binding protein XylG (514 aa).

2 ABC transporter domains span residues 7–246 and 263–508; these read FEMR…VGRE and LEAR…IHAE. ATP is bound at residue 39–46; it reads GENGAGKS.

This sequence belongs to the ABC transporter superfamily. Xylose importer (TC 3.A.1.2.4) family. The complex is composed of two ATP-binding proteins (XylG), two transmembrane proteins (XylH) and a solute-binding protein (XylF).

Its subcellular location is the cell inner membrane. It catalyses the reaction D-xylose(out) + ATP + H2O = D-xylose(in) + ADP + phosphate + H(+). In terms of biological role, part of the ABC transporter complex XylFGH involved in xylose import. Responsible for energy coupling to the transport system. The chain is Xylose import ATP-binding protein XylG from Ralstonia nicotianae (strain ATCC BAA-1114 / GMI1000) (Ralstonia solanacearum).